Consider the following 120-residue polypeptide: Large ribosomal subunit protein bL19 (120 aa).

The protein belongs to the bacterial ribosomal protein bL19 family.

Functionally, this protein is located at the 30S-50S ribosomal subunit interface and may play a role in the structure and function of the aminoacyl-tRNA binding site. This Trichormus variabilis (strain ATCC 29413 / PCC 7937) (Anabaena variabilis) protein is Large ribosomal subunit protein bL19.